Reading from the N-terminus, the 378-residue chain is Decaprenyl-diphosphate synthase subunit 1 (378 aa).

The isopentenyl diphosphate site is built by lysine 72, arginine 75, and histidine 130. 2 residues coordinate Mg(2+): aspartate 137 and aspartate 141. Position 147 (arginine 147) interacts with isopentenyl diphosphate.

This sequence belongs to the FPP/GGPP synthase family. As to quaternary structure, heterotetramer of 2 dps1 and 2 dlp1 subunits. The cofactor is Mg(2+).

Its subcellular location is the mitochondrion. The catalysed reaction is 7 isopentenyl diphosphate + (2E,6E)-farnesyl diphosphate = all-trans-decaprenyl diphosphate + 7 diphosphate. It participates in cofactor biosynthesis; ubiquinone biosynthesis. Supplies decaprenyl diphosphate, the precursor for the side chain of the isoprenoid quinones ubiquinone-10. The sequence is that of Decaprenyl-diphosphate synthase subunit 1 (dps1) from Schizosaccharomyces pombe (strain 972 / ATCC 24843) (Fission yeast).